A 160-amino-acid chain; its full sequence is Lymphocyte antigen 96 (160 aa).

The first 16 residues, 1 to 16, serve as a signal peptide directing secretion; the sequence is MLPFILFSTLLPLIFT. 3 disulfides stabilise this stretch: cysteine 25–cysteine 51, cysteine 37–cysteine 148, and cysteine 95–cysteine 105. N-linked (GlcNAc...) asparagine glycans are attached at residues asparagine 26, asparagine 77, and asparagine 101. Positions 119 to 123 are interaction with lipopolysaccharide; sequence FSFKG. Asparagine 150 carries an N-linked (GlcNAc...) asparagine glycan.

Heterogeneous homomer formed from homodimers; disulfide-linked. Belongs to the lipopolysaccharide (LPS) receptor, a multi-protein complex containing at least CD14, LY96 and TLR4. Binds to the extracellular domains of TLR2 and TLR4. Ligand binding induces interaction with TLR4 and oligomerization of the complex. Post-translationally, N-glycosylated.

The protein resides in the secreted. It localises to the extracellular space. Functionally, binds bacterial lipopolysaccharide (LPS). Cooperates with TLR4 in the innate immune response to bacterial lipopolysaccharide (LPS), and with TLR2 in the response to cell wall components from Gram-positive and Gram-negative bacteria. Enhances TLR4-dependent activation of NF-kappa-B. Cells expressing both LY96 and TLR4, but not TLR4 alone, respond to LPS. In Cricetulus griseus (Chinese hamster), this protein is Lymphocyte antigen 96 (LY96).